The chain runs to 277 residues: Small ribosomal subunit protein uS2 (277 aa).

Residues 247-277 (LSAFESSQDDESDEENREEDLLAKKFDGEAN) form a disordered region. A compositionally biased stretch (acidic residues) spans 253–264 (SQDDESDEENRE). Residues 265–277 (EDLLAKKFDGEAN) are compositionally biased toward basic and acidic residues.

It belongs to the universal ribosomal protein uS2 family.

In Chlamydia pneumoniae (Chlamydophila pneumoniae), this protein is Small ribosomal subunit protein uS2 (rpsB).